The following is a 354-amino-acid chain: Probable mannitol dehydrogenase 1 (354 aa).

Residues Cys43, His65, Cys96, Cys99, Cys102, Cys110, and Cys158 each contribute to the Zn(2+) site.

Belongs to the zinc-containing alcohol dehydrogenase family. Zn(2+) is required as a cofactor.

It carries out the reaction D-mannitol + NAD(+) = D-mannose + NADH + H(+). Oxidizes mannitol to mannose. Provides the initial step by which translocated mannitol is committed to central metabolism and, by regulating mannitol pool size, is important in regulating salt tolerance at the cellular level. The sequence is that of Probable mannitol dehydrogenase 1 (CAD1) from Stylosanthes humilis (Townsville stylo).